The sequence spans 833 residues: Glycerol-3-phosphate acyltransferase (833 aa).

Residues 310 to 315 (HRSHID) carry the HXXXXD motif motif.

This sequence belongs to the GPAT/DAPAT family.

The protein resides in the cell inner membrane. The catalysed reaction is sn-glycerol 3-phosphate + an acyl-CoA = a 1-acyl-sn-glycero-3-phosphate + CoA. The protein operates within phospholipid metabolism; CDP-diacylglycerol biosynthesis; CDP-diacylglycerol from sn-glycerol 3-phosphate: step 1/3. This is Glycerol-3-phosphate acyltransferase from Pseudomonas syringae pv. tomato (strain ATCC BAA-871 / DC3000).